We begin with the raw amino-acid sequence, 205 residues long: 7-methyl-GTP pyrophosphatase (205 aa).

Catalysis depends on Asp79, which acts as the Proton acceptor.

It belongs to the Maf family. YceF subfamily. It depends on a divalent metal cation as a cofactor.

It localises to the cytoplasm. It carries out the reaction N(7)-methyl-GTP + H2O = N(7)-methyl-GMP + diphosphate + H(+). Functionally, nucleoside triphosphate pyrophosphatase that hydrolyzes 7-methyl-GTP (m(7)GTP). May have a dual role in cell division arrest and in preventing the incorporation of modified nucleotides into cellular nucleic acids. The polypeptide is 7-methyl-GTP pyrophosphatase (Paraburkholderia xenovorans (strain LB400)).